We begin with the raw amino-acid sequence, 111 residues long: 2Fe-2S ferredoxin (111 aa).

The 2Fe-2S ferredoxin-type domain occupies isoleucine 5–threonine 107. Residues cysteine 42, cysteine 48, cysteine 51, and cysteine 88 each contribute to the [2Fe-2S] cluster site.

The protein belongs to the adrenodoxin/putidaredoxin family. The cofactor is [2Fe-2S] cluster.

Its function is as follows. Ferredoxin are iron-sulfur proteins that transfer electrons in a wide variety of metabolic reactions. The polypeptide is 2Fe-2S ferredoxin (fdxB) (Rickettsia bellii (strain RML369-C)).